Consider the following 147-residue polypeptide: 6,7-dimethyl-8-ribityllumazine synthase (147 aa).

5-amino-6-(D-ribitylamino)uracil contacts are provided by residues Phe-16, 48–50 (TFD), and 73–75 (AVI). Residue 78 to 79 (DT) participates in (2S)-2-hydroxy-3-oxobutyl phosphate binding. His-81 (proton donor) is an active-site residue. Residue Leu-106 coordinates 5-amino-6-(D-ribitylamino)uracil. Arg-121 provides a ligand contact to (2S)-2-hydroxy-3-oxobutyl phosphate.

This sequence belongs to the DMRL synthase family.

It catalyses the reaction (2S)-2-hydroxy-3-oxobutyl phosphate + 5-amino-6-(D-ribitylamino)uracil = 6,7-dimethyl-8-(1-D-ribityl)lumazine + phosphate + 2 H2O + H(+). Its pathway is cofactor biosynthesis; riboflavin biosynthesis; riboflavin from 2-hydroxy-3-oxobutyl phosphate and 5-amino-6-(D-ribitylamino)uracil: step 1/2. In terms of biological role, catalyzes the formation of 6,7-dimethyl-8-ribityllumazine by condensation of 5-amino-6-(D-ribitylamino)uracil with 3,4-dihydroxy-2-butanone 4-phosphate. This is the penultimate step in the biosynthesis of riboflavin. This chain is 6,7-dimethyl-8-ribityllumazine synthase, found in Aeropyrum pernix (strain ATCC 700893 / DSM 11879 / JCM 9820 / NBRC 100138 / K1).